Reading from the N-terminus, the 241-residue chain is Uridylate kinase (241 aa).

ATP is bound at residue 12-15 (KISG). The involved in allosteric activation by GTP stretch occupies residues 20–25 (GDKGNG). Gly-54 contacts UMP. ATP is bound by residues Gly-55 and Arg-59. UMP contacts are provided by residues Asp-74 and 135–142 (TGNPYFST). ATP contacts are provided by Asn-163, Tyr-169, and Asp-172.

This sequence belongs to the UMP kinase family. As to quaternary structure, homohexamer.

Its subcellular location is the cytoplasm. The catalysed reaction is UMP + ATP = UDP + ADP. Its pathway is pyrimidine metabolism; CTP biosynthesis via de novo pathway; UDP from UMP (UMPK route): step 1/1. Its activity is regulated as follows. Allosterically activated by GTP. Inhibited by UTP. Functionally, catalyzes the reversible phosphorylation of UMP to UDP. The polypeptide is Uridylate kinase (Lactobacillus helveticus (strain DPC 4571)).